Consider the following 435-residue polypeptide: Cyclic GMP-AMP synthase-like receptor (435 aa).

ATP is bound by residues Ser-70 and 82–84 (EFD). The Mg(2+) site is built by Glu-82, Asp-84, and Asp-209. Residue Asp-209 participates in GTP binding. ATP is bound by residues Lys-286 and 300-304 (SYYVK). Residues Leu-311, Asp-312, and Asp-317 each contribute to the Mn(2+) site.

This sequence belongs to the mab-21 family. Mg(2+) serves as cofactor. Requires Mn(2+) as cofactor.

The catalysed reaction is GTP + ATP = 2',3'-cGAMP + 2 diphosphate. It carries out the reaction GTP + ATP = pppGp(2'-5')A + diphosphate. It catalyses the reaction pppGp(2'-5')A = 2',3'-cGAMP + diphosphate. Its function is as follows. Nucleotidyltransferase that catalyzes the formation of cyclic GMP-AMP (2',3'-cGAMP) from ATP and GTP and plays a key role in innate immunity. Directly binds some unknown ligand, activating the nucleotidyltransferase activity, leading to synthesis of 2',3'-cGAMP, a second messenger that binds to and activates Sting, thereby triggering the immune response via activation of the NF-kappa-B transcription factor. This is Cyclic GMP-AMP synthase-like receptor from Ctenocephalides felis (Cat flea).